Consider the following 252-residue polypeptide: Trans-aconitate 2-methyltransferase (252 aa).

This sequence belongs to the methyltransferase superfamily. Tam family.

It is found in the cytoplasm. It carries out the reaction trans-aconitate + S-adenosyl-L-methionine = (E)-3-(methoxycarbonyl)pent-2-enedioate + S-adenosyl-L-homocysteine. Catalyzes the S-adenosylmethionine monomethyl esterification of trans-aconitate. In Shigella dysenteriae serotype 1 (strain Sd197), this protein is Trans-aconitate 2-methyltransferase.